We begin with the raw amino-acid sequence, 233 residues long: Large ribosomal subunit protein uL1 (233 aa).

Belongs to the universal ribosomal protein uL1 family. In terms of assembly, part of the 50S ribosomal subunit.

Binds directly to 23S rRNA. The L1 stalk is quite mobile in the ribosome, and is involved in E site tRNA release. Functionally, protein L1 is also a translational repressor protein, it controls the translation of the L11 operon by binding to its mRNA. In Brucella melitensis biotype 1 (strain ATCC 23456 / CCUG 17765 / NCTC 10094 / 16M), this protein is Large ribosomal subunit protein uL1.